A 379-amino-acid polypeptide reads, in one-letter code: UDP-N-acetylglucosamine--N-acetylmuramyl-(pentapeptide) pyrophosphoryl-undecaprenol N-acetylglucosamine transferase (379 aa).

Residues 17–19 (TGG), asparagine 128, arginine 169, serine 197, and glutamine 298 contribute to the UDP-N-acetyl-alpha-D-glucosamine site.

This sequence belongs to the glycosyltransferase 28 family. MurG subfamily.

It is found in the cell inner membrane. The catalysed reaction is di-trans,octa-cis-undecaprenyl diphospho-N-acetyl-alpha-D-muramoyl-L-alanyl-D-glutamyl-meso-2,6-diaminopimeloyl-D-alanyl-D-alanine + UDP-N-acetyl-alpha-D-glucosamine = di-trans,octa-cis-undecaprenyl diphospho-[N-acetyl-alpha-D-glucosaminyl-(1-&gt;4)]-N-acetyl-alpha-D-muramoyl-L-alanyl-D-glutamyl-meso-2,6-diaminopimeloyl-D-alanyl-D-alanine + UDP + H(+). Its pathway is cell wall biogenesis; peptidoglycan biosynthesis. Functionally, cell wall formation. Catalyzes the transfer of a GlcNAc subunit on undecaprenyl-pyrophosphoryl-MurNAc-pentapeptide (lipid intermediate I) to form undecaprenyl-pyrophosphoryl-MurNAc-(pentapeptide)GlcNAc (lipid intermediate II). This chain is UDP-N-acetylglucosamine--N-acetylmuramyl-(pentapeptide) pyrophosphoryl-undecaprenol N-acetylglucosamine transferase, found in Brucella canis (strain ATCC 23365 / NCTC 10854 / RM-666).